The primary structure comprises 356 residues: Histidinol-phosphate aminotransferase (356 aa).

Lys-211 is subject to N6-(pyridoxal phosphate)lysine.

The protein belongs to the class-II pyridoxal-phosphate-dependent aminotransferase family. Histidinol-phosphate aminotransferase subfamily. In terms of assembly, homodimer. Pyridoxal 5'-phosphate is required as a cofactor.

The enzyme catalyses L-histidinol phosphate + 2-oxoglutarate = 3-(imidazol-4-yl)-2-oxopropyl phosphate + L-glutamate. Its pathway is amino-acid biosynthesis; L-histidine biosynthesis; L-histidine from 5-phospho-alpha-D-ribose 1-diphosphate: step 7/9. The sequence is that of Histidinol-phosphate aminotransferase from Aeromonas hydrophila subsp. hydrophila (strain ATCC 7966 / DSM 30187 / BCRC 13018 / CCUG 14551 / JCM 1027 / KCTC 2358 / NCIMB 9240 / NCTC 8049).